Here is a 385-residue protein sequence, read N- to C-terminus: MKLVRKDIEKDNAGQVTLVPEEPEDMWHTYNLVQVGDSLRASTIRKVQTESSTGSVGSNRVRTTLTLCVEAIDFDSQACQLRVKGTNIQENEYVKMGAYHTIELEPNRQFTLAKKQWDSVVLERIEQACDPAWSADVAAVVMQEGLAHICLVTPSMTLTRAKVEVNIPRKRKGNCSQHDRALERFYEQVVQAIQRHIHFDVVKCVLVASPGFVREQFCDYMFQQAVKTDNKVLLENRSKFLQVHASSGHKYSLKEALCDPTVASRLSDTKAAGEVKALDDFYKMLQHEPDRAFYGLKQVEKANEAMAIDTLLISDELFRHQDVATRSRYVRLVDSVKENAGTVRIFSSLHVSGEQLSQLTGIAAILRFPVPELSDQENDSSSEED.

Lys-162 participates in a covalent cross-link: Glycyl lysine isopeptide (Lys-Gly) (interchain with G-Cter in SUMO2). Ser-374, Ser-380, Ser-381, and Ser-382 each carry phosphoserine.

This sequence belongs to the eukaryotic release factor 1 family. Pelota subfamily. In terms of assembly, component of the Pelota-HBS1L complex, also named Dom34-Hbs1 complex, composed of PELO and HBS1L. Interacts with PINK1. Interacts with ABCE1. Interacts with CNOT4. It depends on a divalent metal cation as a cofactor.

The protein localises to the cytoplasm. Its function is as follows. Component of the Pelota-HBS1L complex, a complex that recognizes stalled ribosomes and triggers the No-Go Decay (NGD) pathway. In the Pelota-HBS1L complex, PELO recognizes ribosomes stalled at the 3' end of an mRNA and engages stalled ribosomes by destabilizing mRNA in the mRNA channel. Following mRNA extraction from stalled ribosomes by the SKI complex, the Pelota-HBS1L complex promotes recruitment of ABCE1, which drives the disassembly of stalled ribosomes, followed by degradation of damaged mRNAs as part of the NGD pathway. As part of the PINK1-regulated signaling, upon mitochondrial damage is recruited to the ribosome/mRNA-ribonucleoprotein complex associated to mitochondrial outer membrane thereby enabling the recruitment of autophagy receptors and induction of mitophagy. In Bos taurus (Bovine), this protein is Protein pelota homolog (PELO).